A 178-amino-acid polypeptide reads, in one-letter code: Cytochrome b6-f complex iron-sulfur subunit (178 aa).

The helical transmembrane segment at 20 to 42 (LLTFGSVTGVALGALYPVVNYFI) threads the bilayer. Residues 65–161 (ATGWLSSHPE…VSVENDNVFV (97 aa)) enclose the Rieske domain. The [2Fe-2S] cluster site is built by cysteine 107, histidine 109, cysteine 125, and histidine 128. Cysteine 112 and cysteine 127 are joined by a disulfide.

It belongs to the Rieske iron-sulfur protein family. As to quaternary structure, the 4 large subunits of the cytochrome b6-f complex are cytochrome b6, subunit IV (17 kDa polypeptide, PetD), cytochrome f and the Rieske protein, while the 4 small subunits are PetG, PetL, PetM and PetN. The complex functions as a dimer. [2Fe-2S] cluster is required as a cofactor.

The protein localises to the cellular thylakoid membrane. The catalysed reaction is 2 oxidized [plastocyanin] + a plastoquinol + 2 H(+)(in) = 2 reduced [plastocyanin] + a plastoquinone + 4 H(+)(out). Its function is as follows. Component of the cytochrome b6-f complex, which mediates electron transfer between photosystem II (PSII) and photosystem I (PSI), cyclic electron flow around PSI, and state transitions. The protein is Cytochrome b6-f complex iron-sulfur subunit of Parasynechococcus marenigrum (strain WH8102).